Reading from the N-terminus, the 96-residue chain is Small ribosomal subunit protein bS6 (96 aa).

Belongs to the bacterial ribosomal protein bS6 family.

Binds together with bS18 to 16S ribosomal RNA. The polypeptide is Small ribosomal subunit protein bS6 (Bacillus cereus (strain ATCC 10987 / NRS 248)).